A 586-amino-acid polypeptide reads, in one-letter code: Septin-9 (586 aa).

Position 1 is an N-acetylmethionine (M1). Residues 1 to 14 (MKKSYSGGTRTSSG) are compositionally biased toward low complexity. 3 disordered regions span residues 1–49 (MKKS…RVQT), 62–108 (KFQD…SRRT), and 134–268 (RAEV…PASR). Phosphoserine occurs at positions 22 and 30. Residues T38, T42, and T49 each carry the phosphothreonine modification. An N6-acetyllysine modification is found at K62. Phosphoserine is present on residues S82, S85, S89, and S96. Residues 134–151 (RAEVLGHKTPEPAPRRTE) show a composition bias toward basic and acidic residues. A Phosphothreonine modification is found at T142. Y278 carries the phosphotyrosine modification. The 273-residue stretch at 295–567 (QGFEFNIMVV…EAYRVKRLNE (273 aa)) folds into the Septin-type G domain. Residues 305 to 312 (GQSGLGKS) form a G1 motif region. 305-312 (GQSGLGKS) is a binding site for GTP. Residues S327 and S332 each carry the phosphoserine modification. Residues T339, G365, 445–453 (KADTLTLEE), G501, and R516 each bind GTP. Positions 362 to 365 (DTPG) are G3 motif. The interval 444 to 447 (AKAD) is G4 motif.

It belongs to the TRAFAC class TrmE-Era-EngA-EngB-Septin-like GTPase superfamily. Septin GTPase family. In terms of assembly, septins polymerize into heterooligomeric protein complexes that form filaments, and associate with cellular membranes, actin filaments, and microtubules. GTPase activity is required for filament formation. Interacts with SEPTIN2, SEPTIN6, SEPTIN7, SEPTIN11 and SEPTIN14. Interacts with RTKN and ARHGEF18. In a mesenchymal cell line, Rho/RTKN signals cause disruption of wild-type septin filaments, but not of those containing isoform 2 variants HNA Trp-106 and Phe-111. In a mesenchymal cell line, isoform 2 variants HNA Trp-106 and Phe-111, but not wild type, form filaments with SEPTIN4. As to expression, widely expressed. Isoforms are differentially expressed in testes, kidney, liver heart, spleen, brain, peripheral blood leukocytes, skeletal muscle and kidney. Specific isoforms appear to demonstrate tissue specificity. Isoform 5 is the most highly expressed in fetal tissue. Isoform 1 is detected in all tissues except the brain and thymus, while isoform 2, isoform 3, and isoform 4 are detected at low levels in approximately half of the fetal tissues.

The protein resides in the cytoplasm. Its subcellular location is the cytoskeleton. Filament-forming cytoskeletal GTPase. May play a role in cytokinesis (Potential). May play a role in the internalization of 2 intracellular microbial pathogens, Listeria monocytogenes and Shigella flexneri. In Homo sapiens (Human), this protein is Septin-9.